A 274-amino-acid polypeptide reads, in one-letter code: GPN-loop GTPase 3 (274 aa).

13–18 lines the GTP pocket; sequence GVGKST. Residues 70-72 carry the Gly-Pro-Asn (GPN)-loop; involved in dimer interface motif; sequence GPN. 173-176 serves as a coordination point for GTP; it reads SKID. A disordered region spans residues 255–274; it reads SESQEPKEPVEEIEEEVDFE. The span at 265–274 shows a compositional bias: acidic residues; that stretch reads EEIEEEVDFE.

The protein belongs to the GPN-loop GTPase family. As to quaternary structure, heterodimers with GPN1 or GPN2. Binds to RNA polymerase II (RNAPII).

Small GTPase required for proper nuclear import of RNA polymerase II and III (RNAPII and RNAPIII). May act at an RNAP assembly step prior to nuclear import. The sequence is that of GPN-loop GTPase 3 from Debaryomyces hansenii (strain ATCC 36239 / CBS 767 / BCRC 21394 / JCM 1990 / NBRC 0083 / IGC 2968) (Yeast).